Reading from the N-terminus, the 467-residue chain is Probable glycerol-3-phosphate dehydrogenase [NAD(+)] 2, cytosolic (467 aa).

NAD(+) is bound by residues 47–52, Lys195, and Ala234; that span reads GAGAWG. Lys195 is a binding site for substrate. The active-site Proton acceptor is the Lys284. Residues Arg346 and Gln374 each contribute to the NAD(+) site. Residue 346–347 participates in substrate binding; sequence RN.

This sequence belongs to the NAD-dependent glycerol-3-phosphate dehydrogenase family.

Its subcellular location is the cytoplasm. It is found in the cytosol. It carries out the reaction sn-glycerol 3-phosphate + NAD(+) = dihydroxyacetone phosphate + NADH + H(+). Functionally, may be involved in cell redox homeostasis. This is Probable glycerol-3-phosphate dehydrogenase [NAD(+)] 2, cytosolic from Oryza sativa subsp. japonica (Rice).